The primary structure comprises 417 residues: Gamma-glutamyl phosphate reductase (417 aa).

Belongs to the gamma-glutamyl phosphate reductase family.

The protein resides in the cytoplasm. The catalysed reaction is L-glutamate 5-semialdehyde + phosphate + NADP(+) = L-glutamyl 5-phosphate + NADPH + H(+). Its pathway is amino-acid biosynthesis; L-proline biosynthesis; L-glutamate 5-semialdehyde from L-glutamate: step 2/2. In terms of biological role, catalyzes the NADPH-dependent reduction of L-glutamate 5-phosphate into L-glutamate 5-semialdehyde and phosphate. The product spontaneously undergoes cyclization to form 1-pyrroline-5-carboxylate. This is Gamma-glutamyl phosphate reductase from Pectobacterium carotovorum subsp. carotovorum (strain PC1).